Reading from the N-terminus, the 144-residue chain is uncharacterized protein (144 aa).

The 108-residue stretch at 13 to 120 folds into the HIT domain; that stretch reads IFCGIVEGNV…VPKYETGLGF (108 aa). The Histidine triad motif motif lies at 105 to 109; the sequence is HYHMH.

This is an uncharacterized protein from Mycoplasma pneumoniae (strain ATCC 29342 / M129 / Subtype 1) (Mycoplasmoides pneumoniae).